We begin with the raw amino-acid sequence, 404 residues long: NADH-quinone oxidoreductase subunit D 1 (404 aa).

The protein belongs to the complex I 49 kDa subunit family. As to quaternary structure, NDH-1 is composed of 14 different subunits. Subunits NuoB, C, D, E, F, and G constitute the peripheral sector of the complex.

The protein localises to the cell inner membrane. It carries out the reaction a quinone + NADH + 5 H(+)(in) = a quinol + NAD(+) + 4 H(+)(out). NDH-1 shuttles electrons from NADH, via FMN and iron-sulfur (Fe-S) centers, to quinones in the respiratory chain. The immediate electron acceptor for the enzyme in this species is believed to be ubiquinone. Couples the redox reaction to proton translocation (for every two electrons transferred, four hydrogen ions are translocated across the cytoplasmic membrane), and thus conserves the redox energy in a proton gradient. This Sorangium cellulosum (strain So ce56) (Polyangium cellulosum (strain So ce56)) protein is NADH-quinone oxidoreductase subunit D 1.